We begin with the raw amino-acid sequence, 502 residues long: Probable cytosol aminopeptidase (502 aa).

2 residues coordinate Mn(2+): lysine 269 and aspartate 274. Lysine 281 is a catalytic residue. Positions 292, 351, and 353 each coordinate Mn(2+). Arginine 355 is a catalytic residue.

This sequence belongs to the peptidase M17 family. Requires Mn(2+) as cofactor.

The protein localises to the cytoplasm. It catalyses the reaction Release of an N-terminal amino acid, Xaa-|-Yaa-, in which Xaa is preferably Leu, but may be other amino acids including Pro although not Arg or Lys, and Yaa may be Pro. Amino acid amides and methyl esters are also readily hydrolyzed, but rates on arylamides are exceedingly low.. It carries out the reaction Release of an N-terminal amino acid, preferentially leucine, but not glutamic or aspartic acids.. Presumably involved in the processing and regular turnover of intracellular proteins. Catalyzes the removal of unsubstituted N-terminal amino acids from various peptides. The protein is Probable cytosol aminopeptidase of Shewanella sediminis (strain HAW-EB3).